The sequence spans 471 residues: Alpha-1,3/1,6-mannosyltransferase alg-2 (471 aa).

N-linked (GlcNAc...) asparagine glycosylation is found at Asn178 and Asn279. The chain crosses the membrane as a helical span at residues 446–466 (GMILLVVGAAVAAVAGVISAV).

It belongs to the glycosyltransferase group 1 family. Glycosyltransferase 4 subfamily.

The protein localises to the endoplasmic reticulum membrane. The catalysed reaction is a beta-D-Man-(1-&gt;4)-beta-D-GlcNAc-(1-&gt;4)-alpha-D-GlcNAc-diphospho-di-trans,poly-cis-dolichol + GDP-alpha-D-mannose = an alpha-D-Man-(1-&gt;3)-beta-D-Man-(1-&gt;4)-beta-D-GlcNAc-(1-&gt;4)-alpha-D-GlcNAc-diphospho-di-trans,poly-cis-dolichol + GDP + H(+). The enzyme catalyses an alpha-D-Man-(1-&gt;3)-beta-D-Man-(1-&gt;4)-beta-D-GlcNAc-(1-&gt;4)-alpha-D-GlcNAc-diphospho-di-trans,poly-cis-dolichol + GDP-alpha-D-mannose = an alpha-D-Man-(1-&gt;3)-[alpha-D-Man-(1-&gt;6)]-beta-D-Man-(1-&gt;4)-beta-D-GlcNAc-(1-&gt;4)-alpha-D-GlcNAc-diphospho-di-trans,poly-cis-dolichol + GDP + H(+). It participates in protein modification; protein glycosylation. Functionally, mannosylates Man(2)GlcNAc(2)-dolichol diphosphate and Man(1)GlcNAc(2)-dolichol diphosphate to form Man(3)GlcNAc(2)-dolichol diphosphate. In Neurospora crassa (strain ATCC 24698 / 74-OR23-1A / CBS 708.71 / DSM 1257 / FGSC 987), this protein is Alpha-1,3/1,6-mannosyltransferase alg-2 (alg-2).